Reading from the N-terminus, the 256-residue chain is 5'-nucleotidase SurE (256 aa).

The a divalent metal cation site is built by D8, D9, S40, and N94.

This sequence belongs to the SurE nucleotidase family. It depends on a divalent metal cation as a cofactor.

It localises to the cytoplasm. The catalysed reaction is a ribonucleoside 5'-phosphate + H2O = a ribonucleoside + phosphate. Its function is as follows. Nucleotidase that shows phosphatase activity on nucleoside 5'-monophosphates. The protein is 5'-nucleotidase SurE of Wolbachia pipientis subsp. Culex pipiens (strain wPip).